The chain runs to 867 residues: MHYLLSRLLHQRQLNASAQLFNVSHYDVITDMSNTFTCLKEIINDPTYPFNKVDQSVVEIVIARLTAAIRETGSIESYAAELVDVLDEVLKHPMTTLNEKSRDVDSPHCKIASDLLSSLFLHYGKKSVMTLTIPVALKCLNSENAELVKNTTSYISLAAIHNGKSLSSHALQIITKVVKGNYSLIRVLPHIYQDNKEPFHAQLSQLIDLLQNQEVDCSEKLSLLQLASMVANTKPEVLIPYLPRFDVYLLSPQLSTALLNIYMSLISQNRTKALSQFLPTLKLAAQSNEFVNNRTTICKIIANIGRVSSTLASEAVDELVLMARHNLAEPQLLQSVLNEIEAIGSMYPTSLRRHVAFFQTLPSSRTIERILGHLNLNNENIPLEVKKQSTESLLSKNSKVFGNLITSGGRTVFEVCESPTVELCELDRNTHSLAMQYQNNRSSGSLSRRSHASIAHSLGAGTHGPYSDINESRELSMISMPSSSRTNVHLSQAASSSRGHSLPQTFSPQAMTQIQMGKDGRVRPVAGGRRPVQWPAGSTETTFPAHLGPVTTSKMCALNEEDEKWINSDRNDVVYKFVEHRKNKIRRYIGEVNTRFPIPVQCTVEGSKSSKHRMVIHFSCQTRSSPCCVFTKEYLFAFKTKYPAFWLHFMFLQMECSAITQFGEVAGKDSQQYQTLEHCWKCLPSSTTKNVLFDTMITAAFPNSKDQDKLIKELDEAGFFAYFTMDSSNNMWNCISCTNPEKVKYFVEEGGVEKVLEGQLKEKKGRWRFLKRWNTKYFTLSSAALNYSTQHMPTDSRALLPSIDLRSIRSVRSLGRGKKARKSLRKAFEIFTADNTSMILKAKDEKNAEEWLHCLQIAMAHARRELS.

The segment at methionine 480–threonine 505 is disordered. Residues glutamate 753–alanine 860 enclose the PH domain.

This sequence belongs to the MELT/VEPH family.

It localises to the cell membrane. The chain is Protein melted homolog from Caenorhabditis briggsae.